The primary structure comprises 79 residues: UPF0654 protein C11D3.01c (79 aa).

The disordered stretch occupies residues 1 to 79 (MPNPGNVIGG…RAQEELENLE (79 aa)). The segment covering 22-45 (EETKQREKEYLEEHEGEVGEEHQK) has biased composition (basic and acidic residues).

It belongs to the UPF0654 (con-6) family.

This is UPF0654 protein C11D3.01c from Schizosaccharomyces pombe (strain 972 / ATCC 24843) (Fission yeast).